We begin with the raw amino-acid sequence, 590 residues long: MSSRKVRVKKLNVKTTLPVLREDQIDPNEYEALTTDNQIATGVEQAEENEYHLQTILKEAGTSNDQEIPVPPPQESDINYDDLYPVPFHKPSSYIRFSQTVEECITCLYDMTTEDDEFLKQYNSKPPATGVLSEDDFEHIMEVFEDTAAEQTPFAAVDNTVAAYDMMLPGLTHLNQSVSTDVLQHAKPVYEYWKSRRQEAGNKPLHPSLKFETHQETDDTDPFVCFRRREARQTRKTRARDNKIAETLKKLRRELEDGRQLVLLAYEREMVKREVMSMDRAIFEERARLKDMKLRLGIKGEDEDLVNQKPQKRKPVEPPVVRQPTGAHLRQPVRSDGRTLDADLVLLSDKLAEKETELRLDIEMKVQNHRKWNQNHIDLTREPLSPVKEQGTEVKFRQAKTQYLMTPPASTSSEMEVDEIAPDAMQLDKRESSVFQFTAGSGEQSKGSQPAFRRRIGRLNRLWIDRRGMVTPPRELGEDRSDRWKYDSDSDDEEPPVYEVDPFDTRALKFRATIPLNPYMFRGRPAVPPEAVAAAQAQAGNRVLPSPAAAAAHAHAQAHAQAAAAAHLAAQAQAKAQAVAQQQAQAAQGV.

Disordered stretches follow at residues 302–335 (DEDL…PVRS) and 471–497 (TPPR…EPPV). Residues 475-488 (ELGEDRSDRWKYDS) show a composition bias toward basic and acidic residues.

The protein belongs to the enhancer of polycomb family. Component of the NuA4 histone acetyltransferase complex.

Its subcellular location is the nucleus. Its function is as follows. Component of the NuA4 histone acetyltransferase complex which is involved in transcriptional activation of selected genes principally by acetylation of nucleosomal histone H4 and H2A. The NuA4 complex is also involved in DNA repair. Involved in gene silencing by neighboring heterochromatin, blockage of the silencing spreading along the chromosome, and required for cell cycle progression through G2/M. The chain is Enhancer of polycomb-like protein 1 (EPL1) from Gibberella zeae (strain ATCC MYA-4620 / CBS 123657 / FGSC 9075 / NRRL 31084 / PH-1) (Wheat head blight fungus).